The sequence spans 605 residues: Probable Xaa-Pro aminopeptidase P (605 aa).

Aspartate 402, aspartate 413, glutamate 511, and glutamate 525 together coordinate Mn(2+).

It belongs to the peptidase M24B family. Mn(2+) serves as cofactor.

The enzyme catalyses Release of any N-terminal amino acid, including proline, that is linked to proline, even from a dipeptide or tripeptide.. Catalyzes the removal of a penultimate prolyl residue from the N-termini of peptides. In Leptosphaeria maculans (strain JN3 / isolate v23.1.3 / race Av1-4-5-6-7-8) (Blackleg fungus), this protein is Probable Xaa-Pro aminopeptidase P (AMPP).